The sequence spans 120 residues: Large ribosomal subunit protein bL19 (120 aa).

Belongs to the bacterial ribosomal protein bL19 family.

In terms of biological role, this protein is located at the 30S-50S ribosomal subunit interface and may play a role in the structure and function of the aminoacyl-tRNA binding site. The polypeptide is Large ribosomal subunit protein bL19 (Cyanothece sp. (strain PCC 7425 / ATCC 29141)).